We begin with the raw amino-acid sequence, 515 residues long: 2,3-bisphosphoglycerate-independent phosphoglycerate mutase (515 aa).

Residues D14 and S64 each coordinate Mn(2+). The active-site Phosphoserine intermediate is the S64. Substrate-binding positions include H125, 155–156, R187, R193, 263–266, and K337; these read RD and RADR. Mn(2+) is bound by residues D404, H408, D445, H446, and H464.

This sequence belongs to the BPG-independent phosphoglycerate mutase family. Monomer. Requires Mn(2+) as cofactor.

It carries out the reaction (2R)-2-phosphoglycerate = (2R)-3-phosphoglycerate. Its pathway is carbohydrate degradation; glycolysis; pyruvate from D-glyceraldehyde 3-phosphate: step 3/5. Catalyzes the interconversion of 2-phosphoglycerate and 3-phosphoglycerate. The sequence is that of 2,3-bisphosphoglycerate-independent phosphoglycerate mutase from Pseudomonas paraeruginosa (strain DSM 24068 / PA7) (Pseudomonas aeruginosa (strain PA7)).